We begin with the raw amino-acid sequence, 477 residues long: Metallopeptidase AprA (477 aa).

The first 20 residues, 1 to 20 (MSKAKDKAIVSAAQASTAYS), serve as a signal peptide directing secretion. H183 lines the Zn(2+) pocket. Residue E184 is part of the active site. Residues H187 and H193 each coordinate Zn(2+). Ca(2+) is bound by residues R264, G266, T268, D296, G298, G299, D301, T338, E340, G345, G347, D349, N354, A356, N358, G362, G363, A364, G365, D367, G371, A372, G373, G374, D376, G380, G381, A382, G383, D385, D394, D401, D411, D453, S455, and D461. Hemolysin-type calcium-binding repeat units lie at residues 343 to 360 (FGGA…ANVI), 361 to 378 (KGGA…ADQL), and 379 to 391 (WGGA…VFGA).

This sequence belongs to the peptidase M10B family. Ca(2+) serves as cofactor. It depends on Zn(2+) as a cofactor.

It is found in the secreted. Its activity is regulated as follows. Is completely inhibited by the metal cation chelators 1,10-phenanthroline and EDTA, but PMSF, pepstatin A and E-64 have no effect on activity. Peptidase able to cleave azocasein and the milk substrates beta-casein and Na-caseinate. Can withstand UHT processing of milk, and is able to spoil UHT milk over the storage period. In Pseudomonas marginalis (Pseudomonas panacis), this protein is Metallopeptidase AprA.